Consider the following 381-residue polypeptide: Neuropeptide Y receptor type 2 (381 aa).

A disordered region spans residues 1 to 37 (MGPIGTEADENQTVEEIKVEPYGPGHTTPRGELAPDP). Topologically, residues 1 to 52 (MGPIGTEADENQTVEEIKVEPYGPGHTTPRGELAPDPEPELIDSTKLTEVRV) are extracellular. Asn11 is a glycosylation site (N-linked (GlcNAc...) asparagine). The helical transmembrane segment at 53 to 73 (VLILAYCSIILLGVVGNSLVI) threads the bilayer. Over 74–87 (HVVIKFKSMRTVTN) the chain is Cytoplasmic. Residues 88 to 108 (FFIANLAVADLLVNTLCLPFT) form a helical membrane-spanning segment. The Extracellular segment spans residues 109–125 (LTYTLMGEWKMGPVLCH). Cysteines 124 and 204 form a disulfide. The chain crosses the membrane as a helical span at residues 126 to 146 (LVPYAQGLAVQVSTVTLTVIA). Residues 147–166 (LDRHRCIVYHLDSKISKQNS) are Cytoplasmic-facing. Residues 167 to 187 (FLIIGLAWGISALLASPLAIF) traverse the membrane as a helical segment. At 188 to 217 (REYSLIEIIPDFEIVACTEKWPGEEKSIYG) the chain is on the extracellular side. The helical transmembrane segment at 218–238 (TVYSLSSLLILYVLPLGIISV) threads the bilayer. The Cytoplasmic portion of the chain corresponds to 239–269 (SYVRIWSKLKNHVSPGAANDHYHQRRQKTTK). Residues 270–290 (MLVFVVVVFAVSWLPLHAFQL) form a helical membrane-spanning segment. Residues 291–305 (AVDIDSQVLDLKEYK) are Extracellular-facing. Residues 306-326 (LIFTVFHIIAMCSTFANPLLY) form a helical membrane-spanning segment. At 327-381 (GWMNSNYRKAFLSAFRCQQRLDAIQSEVCVTGKAKTNVEVEKNHGAADSAEATNV) the chain is on the cytoplasmic side. The S-palmitoyl cysteine moiety is linked to residue Cys343.

It belongs to the G-protein coupled receptor 1 family.

It is found in the cell membrane. In terms of biological role, receptor for neuropeptide Y and peptide YY. This is Neuropeptide Y receptor type 2 (NPY2R) from Cavia porcellus (Guinea pig).